The chain runs to 324 residues: Beta-ketoacyl-[acyl-carrier-protein] synthase III (324 aa).

Active-site residues include cysteine 112 and histidine 251. Residues 252 to 256 (QANLR) are ACP-binding. Residue asparagine 281 is part of the active site.

This sequence belongs to the thiolase-like superfamily. FabH family. As to quaternary structure, homodimer.

The protein resides in the cytoplasm. It carries out the reaction malonyl-[ACP] + acetyl-CoA + H(+) = 3-oxobutanoyl-[ACP] + CO2 + CoA. It functions in the pathway lipid metabolism; fatty acid biosynthesis. Functionally, catalyzes the condensation reaction of fatty acid synthesis by the addition to an acyl acceptor of two carbons from malonyl-ACP. Catalyzes the first condensation reaction which initiates fatty acid synthesis and may therefore play a role in governing the total rate of fatty acid production. Possesses both acetoacetyl-ACP synthase and acetyl transacylase activities. Its substrate specificity determines the biosynthesis of branched-chain and/or straight-chain of fatty acids. The chain is Beta-ketoacyl-[acyl-carrier-protein] synthase III from Clostridium perfringens (strain SM101 / Type A).